The following is a 2554-amino-acid chain: Protein sevenless (2554 aa).

Residues 1–10 are compositionally biased toward polar residues; the sequence is MTMFWQQNVD. The disordered stretch occupies residues 1–25; the sequence is MTMFWQQNVDHQSDEQDKQAKGAAP. The Extracellular segment spans residues 1-2123; the sequence is MTMFWQQNVD…AEPFVSPEKR (2123 aa). Residues 11–20 are compositionally biased toward basic and acidic residues; the sequence is HQSDEQDKQA. N-linked (GlcNAc...) asparagine glycosylation occurs at N30. Residues 51-70 are compositionally biased toward low complexity; the sequence is NQQAPGTSSSSSNSQNASPS. The tract at residues 51-75 is disordered; sequence NQQAPGTSSSSSNSQNASPSKIVVR. N-linked (GlcNAc...) asparagine glycosylation occurs at N129. A disordered region spans residues 181–208; that stretch reads SRPQSTMAHHPDDRDRDRDPSEEQHGVD. A compositionally biased stretch (basic and acidic residues) spans 189 to 208; the sequence is HHPDDRDRDRDPSEEQHGVD. Residues 440–533 form the Fibronectin type-III 1 domain; it reads APVIEHLMGL…GFVQTHSARN (94 aa). N481, N505, N617, and N647 each carry an N-linked (GlcNAc...) asparagine glycan. One can recognise a Fibronectin type-III 2 domain in the interval 824–924; sequence AGGKPHSLKA…EPLAARTWPL (101 aa). N966 carries N-linked (GlcNAc...) asparagine glycosylation. Residues 1010–1053 form an LDL-receptor class B repeat; that stretch reads GRVYWTDLARNCVVRMDPWSGSRELLPVFEANFLALDPRQGHLY. Fibronectin type-III domains follow at residues 1202–1290 and 1294–1397; these read LPDS…TPPV and QPRR…VAPE. Residues N1228, N1313, N1353, N1550, N1557, N1639, N1725, N1756, N1804, N1889, N1947, and N2073 are each glycosylated (N-linked (GlcNAc...) asparagine). 3 Fibronectin type-III domains span residues 1801–1901, 1902–1988, and 1995–2117; these read PPRN…SFAE, LPEL…VYET, and QPGK…AEPF. Residues 2124–2147 form a helical membrane-spanning segment; sequence GSLVLAIIAPAAIVSSCVLALVLV. Topologically, residues 2148–2554 are cytoplasmic; that stretch reads RKVQKRRLRA…LYANEGVSRL (407 aa). The 277-residue stretch at 2209–2485 folds into the Protein kinase domain; the sequence is LKLLRFLGSG…RCYNTLHAIS (277 aa). Residues 2215-2223 and K2242 contribute to the ATP site; that span reads LGSGAFGEV. The Proton acceptor role is filled by D2343. The residue at position 2380 (Y2380) is a Phosphotyrosine; by autocatalysis. Residues 2515-2527 show a composition bias toward basic and acidic residues; that stretch reads GQPLEEHREHNER. The disordered stretch occupies residues 2515-2534; that stretch reads GQPLEEHREHNERPEDENLT.

It belongs to the protein kinase superfamily. Tyr protein kinase family. Insulin receptor subfamily. In terms of assembly, may form a complex with drk and Sos. Binds the phosphotyrosine interaction domain (PID) of Dab.

The protein localises to the cell membrane. The catalysed reaction is L-tyrosyl-[protein] + ATP = O-phospho-L-tyrosyl-[protein] + ADP + H(+). Its function is as follows. Receptor for an extracellular signal required to instruct a cell to differentiate into an R7 photoreceptor. The ligand for sev is the boss (bride of sevenless) protein on the surface of the neighboring R8 cell. This chain is Protein sevenless (sev), found in Drosophila melanogaster (Fruit fly).